We begin with the raw amino-acid sequence, 724 residues long: uncharacterized protein (724 aa).

Disordered stretches follow at residues 97–131 (RKSFTTPKGVSSEARRSFTRSASYSESNNSFYPSP), 187–252 (ETKI…FETE), 309–434 (FETE…TSKL), and 454–473 (RGVEGKTKKASKGQNSVAEK). The span at 115-128 (TRSASYSESNNSFY) shows a compositional bias: polar residues. The stretch at 187-217 (ETKIGIEEENEESEILAEEKEEEDNDFSVLE) forms a coiled coil. Positions 193–212 (EEENEESEILAEEKEEEDND) are enriched in acidic residues. 2 stretches are compositionally biased toward basic and acidic residues: residues 223 to 252 (QEIKTEHHRESSGTEHETEAKDHSEGFETE) and 309 to 322 (FETEHENETEDHSE). 2 stretches are compositionally biased toward low complexity: residues 323–333 (TTTSETDSTES) and 347–366 (SPQTPSPTVSTFNTKSSLRS). Residues 367–388 (QPPPPPPSPEHKAPAPPPPPPM) are compositionally biased toward pro residues. Over residues 400 to 410 (FSKTHSTNGDN) the composition is skewed to polar residues. Coiled coils occupy residues 495–522 (SYFQQIEEDVQKYAKSIEELKSSIHSFQ) and 649–678 (MELALKERREANEEAKNGEESKMKEERAKR).

This is an uncharacterized protein from Arabidopsis thaliana (Mouse-ear cress).